A 360-amino-acid chain; its full sequence is tRNA (guanine(37)-N(1))-methyltransferase (360 aa).

S-adenosyl-L-methionine contacts are provided by residues R197, 235-236 (DL), and N283.

This sequence belongs to the class I-like SAM-binding methyltransferase superfamily. TRM5/TYW2 family. In terms of assembly, monomer.

It is found in the mitochondrion matrix. It localises to the nucleus. The protein localises to the cytoplasm. It carries out the reaction guanosine(37) in tRNA + S-adenosyl-L-methionine = N(1)-methylguanosine(37) in tRNA + S-adenosyl-L-homocysteine + H(+). Its function is as follows. Specifically methylates the N1 position of guanosine-37 in various cytoplasmic and mitochondrial tRNAs. Methylation is not dependent on the nature of the nucleoside 5' of the target nucleoside. This is the first step in the biosynthesis of wybutosine (yW), a modified base adjacent to the anticodon of tRNAs and required for accurate decoding. The protein is tRNA (guanine(37)-N(1))-methyltransferase of Encephalitozoon cuniculi (strain GB-M1) (Microsporidian parasite).